The sequence spans 282 residues: HTH-type transcriptional activator RhaR (282 aa).

The HTH araC/xylS-type domain occupies 179–277; the sequence is DKLITALANS…GMTPSQWRHL (99 aa). 2 consecutive DNA-binding regions (H-T-H motif) follow at residues 196–217 and 244–267; these read DAFCQQEQCSERVLRQQFRAQT and ISEISMQCGFEDSNYFSVVFTRET.

As to quaternary structure, binds DNA as a dimer.

The protein resides in the cytoplasm. Its function is as follows. Activates expression of the rhaSR operon in response to L-rhamnose. The protein is HTH-type transcriptional activator RhaR of Salmonella typhimurium (strain LT2 / SGSC1412 / ATCC 700720).